The primary structure comprises 287 residues: Carbon monoxide dehydrogenase medium chain (287 aa).

The 177-residue stretch at 1-177 (MIPPRFEYHA…VEIRVPAFAQ (177 aa)) folds into the FAD-binding PCMH-type domain. FAD-binding positions include 32–36 (AGGHS) and 111–115 (TIGGD).

Dimer of heterotrimers. Each heterotrimer consists of a large, a medium and a small subunit. FAD serves as cofactor.

It catalyses the reaction CO + a quinone + H2O = a quinol + CO2. Functionally, catalyzes the oxidation of carbon monoxide to carbon dioxide. This Hydrogenophaga pseudoflava (Pseudomonas carboxydoflava) protein is Carbon monoxide dehydrogenase medium chain (cutM).